The sequence spans 87 residues: Putative regulatory protein CHY_1489 (87 aa).

This sequence belongs to the RemA family.

The polypeptide is Putative regulatory protein CHY_1489 (Carboxydothermus hydrogenoformans (strain ATCC BAA-161 / DSM 6008 / Z-2901)).